We begin with the raw amino-acid sequence, 441 residues long: Amino-acid acetyltransferase (441 aa).

Residues 295-434 form the N-acetyltransferase domain; the sequence is EQVRRATIND…QALYNYQRRS (140 aa).

Belongs to the acetyltransferase family. ArgA subfamily. In terms of assembly, homohexamer.

It localises to the cytoplasm. It catalyses the reaction L-glutamate + acetyl-CoA = N-acetyl-L-glutamate + CoA + H(+). It functions in the pathway amino-acid biosynthesis; L-arginine biosynthesis; N(2)-acetyl-L-ornithine from L-glutamate: step 1/4. This is Amino-acid acetyltransferase from Pectobacterium carotovorum subsp. carotovorum (strain PC1).